The sequence spans 1420 residues: DNA-directed RNA polymerase subunit beta' (1420 aa).

Cys-71, Cys-73, Cys-86, and Cys-89 together coordinate Zn(2+). Positions 461, 463, and 465 each coordinate Mg(2+). 4 residues coordinate Zn(2+): Cys-815, Cys-889, Cys-896, and Cys-899.

The protein belongs to the RNA polymerase beta' chain family. In terms of assembly, the RNAP catalytic core consists of 2 alpha, 1 beta, 1 beta' and 1 omega subunit. When a sigma factor is associated with the core the holoenzyme is formed, which can initiate transcription. The cofactor is Mg(2+). It depends on Zn(2+) as a cofactor.

It catalyses the reaction RNA(n) + a ribonucleoside 5'-triphosphate = RNA(n+1) + diphosphate. Its function is as follows. DNA-dependent RNA polymerase catalyzes the transcription of DNA into RNA using the four ribonucleoside triphosphates as substrates. The sequence is that of DNA-directed RNA polymerase subunit beta' from Histophilus somni (strain 129Pt) (Haemophilus somnus).